The chain runs to 39 residues: Mu-like prophage FluMu protein com (39 aa).

The protein belongs to the com family.

The polypeptide is Mu-like prophage FluMu protein com (Haemophilus influenzae (strain ATCC 51907 / DSM 11121 / KW20 / Rd)).